A 210-amino-acid polypeptide reads, in one-letter code: MIDPTETYMNTLVPMVVEQTSRGERAYDIFSRLLKERIIFLNGPVHDGMSSLIVAQLLHLEAENPSKEISMYINSPGGVVTSGLSIYDTMQYIKPKVSTLVIGQAASMGSLLLTAGEAGMRFSLPNSRVMVHQPSGGYQGQATDIMIHAEETLKLKRRLNEIYVKHTGQDYDTIEKALERDNFMSPEQAKEFGLIDEIVENRSKADDAES.

Catalysis depends on Ser107, which acts as the Nucleophile. The active site involves His132.

This sequence belongs to the peptidase S14 family. As to quaternary structure, fourteen ClpP subunits assemble into 2 heptameric rings which stack back to back to give a disk-like structure with a central cavity, resembling the structure of eukaryotic proteasomes.

It localises to the cytoplasm. It carries out the reaction Hydrolysis of proteins to small peptides in the presence of ATP and magnesium. alpha-casein is the usual test substrate. In the absence of ATP, only oligopeptides shorter than five residues are hydrolyzed (such as succinyl-Leu-Tyr-|-NHMec, and Leu-Tyr-Leu-|-Tyr-Trp, in which cleavage of the -Tyr-|-Leu- and -Tyr-|-Trp bonds also occurs).. Cleaves peptides in various proteins in a process that requires ATP hydrolysis. Has a chymotrypsin-like activity. Plays a major role in the degradation of misfolded proteins. The protein is ATP-dependent Clp protease proteolytic subunit of Ruegeria sp. (strain TM1040) (Silicibacter sp.).